Reading from the N-terminus, the 258-residue chain is Caffeoyl-CoA O-methyltransferase 1 (258 aa).

Residues M1–A16 are compositionally biased toward low complexity. Positions M1–H31 are disordered. Positions Q22 to H31 are enriched in basic and acidic residues. K32 serves as a coordination point for substrate. S-adenosyl-L-methionine is bound by residues T74, E96, G98–V99, S104, D122, and A151. D174 contacts substrate. D174 contributes to the a divalent metal cation binding site. S-adenosyl-L-methionine is bound at residue D176. 2 residues coordinate a divalent metal cation: D200 and N201. N205 lines the substrate pocket.

Belongs to the class I-like SAM-binding methyltransferase superfamily. Cation-dependent O-methyltransferase family. CCoAMT subfamily. A divalent metal cation serves as cofactor.

It carries out the reaction (E)-caffeoyl-CoA + S-adenosyl-L-methionine = (E)-feruloyl-CoA + S-adenosyl-L-homocysteine + H(+). Its pathway is aromatic compound metabolism; phenylpropanoid biosynthesis. Functionally, methylates caffeoyl-CoA to feruloyl-CoA and 5-hydroxyferuloyl-CoA to sinapoyl-CoA. Plays a role in the synthesis of feruloylated polysaccharides. Involved in the reinforcement of the plant cell wall. Also involved in the responding to wounding or pathogen challenge by the increased formation of cell wall-bound ferulic acid polymers. The polypeptide is Caffeoyl-CoA O-methyltransferase 1 (CCOAOMT1) (Zea mays (Maize)).